The chain runs to 286 residues: MIYTCLSPAKINLFLYVTGRRKDGYHNIQTLFQFLDYGDQFKIIANKTGNIELFTEKKIFMNVQNSIIIAAKLLKKTALLQGKLQNSSYGAKIFLKKNIPMGSGLGGGSSNAATTLVVLNKLWNTQYTLKELSLLGLRIGADVPGFVMGNTAVIEGIGDILYPIVQKEKWYLVVYPCINISTRYMFSSPFLMSNTAKKSLQVLLKTPFKNDFENIAKKQFVPIKKLIRMLSSYAPSRMTGTGSCVFSEFDNKKSAQKIFSVLPKNVQGFIAKSVNISPLHKTLYKR.

Residue K10 is part of the active site. 100–110 (PMGSGLGGGSS) is an ATP binding site. Residue D142 is part of the active site.

The protein belongs to the GHMP kinase family. IspE subfamily. As to quaternary structure, homodimer.

It catalyses the reaction 4-CDP-2-C-methyl-D-erythritol + ATP = 4-CDP-2-C-methyl-D-erythritol 2-phosphate + ADP + H(+). It participates in isoprenoid biosynthesis; isopentenyl diphosphate biosynthesis via DXP pathway; isopentenyl diphosphate from 1-deoxy-D-xylulose 5-phosphate: step 3/6. Its function is as follows. Catalyzes the phosphorylation of the position 2 hydroxy group of 4-diphosphocytidyl-2C-methyl-D-erythritol. The polypeptide is 4-diphosphocytidyl-2-C-methyl-D-erythritol kinase (Buchnera aphidicola subsp. Acyrthosiphon pisum (strain APS) (Acyrthosiphon pisum symbiotic bacterium)).